A 260-amino-acid chain; its full sequence is Purine nucleoside phosphorylase PD_1754 (260 aa).

Zn(2+) contacts are provided by His-79, Cys-120, and His-137.

The protein belongs to the purine nucleoside phosphorylase YfiH/LACC1 family. In terms of assembly, homodimer. Requires Cu(2+) as cofactor. It depends on Zn(2+) as a cofactor.

It carries out the reaction adenosine + phosphate = alpha-D-ribose 1-phosphate + adenine. It catalyses the reaction S-methyl-5'-thioadenosine + phosphate = 5-(methylsulfanyl)-alpha-D-ribose 1-phosphate + adenine. The catalysed reaction is inosine + phosphate = alpha-D-ribose 1-phosphate + hypoxanthine. The enzyme catalyses adenosine + H2O + H(+) = inosine + NH4(+). Purine nucleoside enzyme that catalyzes the phosphorolysis of adenosine and inosine nucleosides, yielding D-ribose 1-phosphate and the respective free bases, adenine and hypoxanthine. Also catalyzes the phosphorolysis of S-methyl-5'-thioadenosine into adenine and S-methyl-5-thio-alpha-D-ribose 1-phosphate. Also has adenosine deaminase activity. This chain is Purine nucleoside phosphorylase PD_1754, found in Xylella fastidiosa (strain Temecula1 / ATCC 700964).